The following is a 192-amino-acid chain: Pyridoxal 5'-phosphate synthase subunit PdxT (192 aa).

An L-glutamine-binding site is contributed by 50–52 (GES). Cys82 serves as the catalytic Nucleophile. Residues Arg109 and 136–137 (IR) each bind L-glutamine. Active-site charge relay system residues include His172 and Glu174.

Belongs to the glutaminase PdxT/SNO family. As to quaternary structure, in the presence of PdxS, forms a dodecamer of heterodimers. Only shows activity in the heterodimer.

The catalysed reaction is aldehydo-D-ribose 5-phosphate + D-glyceraldehyde 3-phosphate + L-glutamine = pyridoxal 5'-phosphate + L-glutamate + phosphate + 3 H2O + H(+). It carries out the reaction L-glutamine + H2O = L-glutamate + NH4(+). It functions in the pathway cofactor biosynthesis; pyridoxal 5'-phosphate biosynthesis. Its function is as follows. Catalyzes the hydrolysis of glutamine to glutamate and ammonia as part of the biosynthesis of pyridoxal 5'-phosphate. The resulting ammonia molecule is channeled to the active site of PdxS. This chain is Pyridoxal 5'-phosphate synthase subunit PdxT, found in Haemophilus influenzae (strain PittEE).